The primary structure comprises 188 residues: Adenine phosphoribosyltransferase (188 aa).

It belongs to the purine/pyrimidine phosphoribosyltransferase family. Homodimer.

It localises to the cytoplasm. It catalyses the reaction AMP + diphosphate = 5-phospho-alpha-D-ribose 1-diphosphate + adenine. It participates in purine metabolism; AMP biosynthesis via salvage pathway; AMP from adenine: step 1/1. In terms of biological role, catalyzes a salvage reaction resulting in the formation of AMP, that is energically less costly than de novo synthesis. The protein is Adenine phosphoribosyltransferase of Burkholderia orbicola (strain MC0-3).